The following is a 228-amino-acid chain: Octanoyltransferase (228 aa).

Residues 30-213 (NKVEDIMLLL…YFSRVFDFEP (184 aa)) enclose the BPL/LPL catalytic domain. Residues 75 to 82 (RGGDVTYH), 143 to 145 (AIG), and 156 to 158 (GFA) contribute to the substrate site. The active-site Acyl-thioester intermediate is Cys-174.

The protein belongs to the LipB family.

Its subcellular location is the cytoplasm. The enzyme catalyses octanoyl-[ACP] + L-lysyl-[protein] = N(6)-octanoyl-L-lysyl-[protein] + holo-[ACP] + H(+). Its pathway is protein modification; protein lipoylation via endogenous pathway; protein N(6)-(lipoyl)lysine from octanoyl-[acyl-carrier-protein]: step 1/2. In terms of biological role, catalyzes the transfer of endogenously produced octanoic acid from octanoyl-acyl-carrier-protein onto the lipoyl domains of lipoate-dependent enzymes. Lipoyl-ACP can also act as a substrate although octanoyl-ACP is likely to be the physiological substrate. This chain is Octanoyltransferase, found in Desulforamulus reducens (strain ATCC BAA-1160 / DSM 100696 / MI-1) (Desulfotomaculum reducens).